Consider the following 400-residue polypeptide: Acetate kinase (400 aa).

Asparagine 7 provides a ligand contact to Mg(2+). Lysine 14 lines the ATP pocket. Arginine 92 contacts substrate. The active-site Proton donor/acceptor is the aspartate 149. ATP-binding positions include 209 to 213 (HLGNG), 283 to 285 (DAR), and 331 to 335 (GMGEN). Glutamate 385 is a Mg(2+) binding site.

Belongs to the acetokinase family. In terms of assembly, homodimer. The cofactor is Mg(2+). Mn(2+) serves as cofactor.

It is found in the cytoplasm. The enzyme catalyses acetate + ATP = acetyl phosphate + ADP. Its pathway is metabolic intermediate biosynthesis; acetyl-CoA biosynthesis; acetyl-CoA from acetate: step 1/2. Its function is as follows. Catalyzes the formation of acetyl phosphate from acetate and ATP. Can also catalyze the reverse reaction. The protein is Acetate kinase of Helicobacter acinonychis (strain Sheeba).